We begin with the raw amino-acid sequence, 331 residues long: Ferredoxin--NADP reductase (331 aa).

FAD is bound by residues Glu34, Gln42, Tyr47, Val87, Phe121, Asp285, and Thr325.

This sequence belongs to the ferredoxin--NADP reductase type 2 family. In terms of assembly, homodimer. FAD serves as cofactor.

It carries out the reaction 2 reduced [2Fe-2S]-[ferredoxin] + NADP(+) + H(+) = 2 oxidized [2Fe-2S]-[ferredoxin] + NADPH. In Lactiplantibacillus plantarum (strain ATCC BAA-793 / NCIMB 8826 / WCFS1) (Lactobacillus plantarum), this protein is Ferredoxin--NADP reductase.